We begin with the raw amino-acid sequence, 428 residues long: Glycine reductase complex component B subunits alpha and beta (428 aa).

Residue Cys242 is the Schiff-base intermediate with substrate; via pyruvic acid of the active site. The residue at position 242 (Cys242) is a Pyruvic acid (Cys).

In terms of assembly, heterohexamer of two alpha, two beta and two gamma subunits. Component of the glycine reductase complex, together with components A and C. PB is substrate specific. In terms of processing, the peptide chain is cleaved into beta and alpha chains, and the alpha chain N-terminal cysteine is deaminated and oxidized to form a reactive pyruvoyl group.

It carries out the reaction acetyl phosphate + [thioredoxin]-disulfide + NH4(+) + H2O = [thioredoxin]-dithiol + glycine + phosphate + H(+). In terms of biological role, in the first step of glycine reductase, the substrate is bound to component PB via a Schiff base intermediate. Then the PB-activated substrate is nucleophilically attacked by the selenol anion of component PA to transform it to a carboxymethylated selenoether and the respective amine. By action of component PC, acetyl phosphate is formed, leaving component PA in its oxidized state. Finally component PA becomes reduced by the thioredoxin system to start a new catalytic cycle of reductive deamination. The protein is Glycine reductase complex component B subunits alpha and beta (grdE) of Peptoclostridium acidaminophilum (Eubacterium acidaminophilum).